The chain runs to 182 residues: Adenylate kinase (182 aa).

12 to 17 (GAGKGT) contacts ATP. The interval 32 to 61 (STGELLRKEIEMNTNLGIQVKDIMNRGELV) is NMP. Residues Thr-33, Arg-38, 59–61 (ELV), 85–88 (GYPR), and Gln-92 each bind AMP. Residues 126–132 (LRGRKDD) form an LID region. Residue Arg-127 coordinates ATP. 2 residues coordinate AMP: Arg-129 and Arg-140. Arg-168 serves as a coordination point for ATP.

This sequence belongs to the adenylate kinase family. As to quaternary structure, monomer.

The protein localises to the cytoplasm. It carries out the reaction AMP + ATP = 2 ADP. Its pathway is purine metabolism; AMP biosynthesis via salvage pathway; AMP from ADP: step 1/1. Its function is as follows. Catalyzes the reversible transfer of the terminal phosphate group between ATP and AMP. Plays an important role in cellular energy homeostasis and in adenine nucleotide metabolism. The polypeptide is Adenylate kinase (Prochlorococcus marinus (strain AS9601)).